Here is a 330-residue protein sequence, read N- to C-terminus: Erlin-2-B (330 aa).

Residues 1-2 lie on the Cytoplasmic side of the membrane; that stretch reads MS. Residues 3 to 23 form a helical membrane-spanning segment; that stretch reads HAGAIAALGVALIAAALFSAI. The Lumenal segment spans residues 24–330; sequence HKIEEGHVGV…NEPAAAEELK (307 aa). N-linked (GlcNAc...) asparagine glycosylation is present at N106. The interval 308–330 is disordered; that stretch reads SSSAGPRVQSAKRNEPAAAEELK. Over residues 319 to 330 the composition is skewed to basic and acidic residues; the sequence is KRNEPAAAEELK.

Belongs to the band 7/mec-2 family.

Its subcellular location is the endoplasmic reticulum membrane. In terms of biological role, mediates the endoplasmic reticulum-associated degradation (ERAD) of inositol 1,4,5-trisphosphate receptors (IP3Rs). Promotes sterol-accelerated ERAD of HMGCR. Involved in regulation of cellular cholesterol homeostasis by regulation the SREBP signaling pathway. In Xenopus laevis (African clawed frog), this protein is Erlin-2-B (erlin2-b).